The sequence spans 165 residues: 2-C-methyl-D-erythritol 2,4-cyclodiphosphate synthase (165 aa).

A divalent metal cation is bound by residues Asp-13 and His-15. Residues 13–15 (DRH) and 39–40 (HS) each bind 4-CDP-2-C-methyl-D-erythritol 2-phosphate. His-47 contacts a divalent metal cation. 4-CDP-2-C-methyl-D-erythritol 2-phosphate is bound by residues 61–63 (DIG) and Phe-141.

The protein belongs to the IspF family. As to quaternary structure, homotrimer. A divalent metal cation is required as a cofactor.

The catalysed reaction is 4-CDP-2-C-methyl-D-erythritol 2-phosphate = 2-C-methyl-D-erythritol 2,4-cyclic diphosphate + CMP. Its pathway is isoprenoid biosynthesis; isopentenyl diphosphate biosynthesis via DXP pathway; isopentenyl diphosphate from 1-deoxy-D-xylulose 5-phosphate: step 4/6. In terms of biological role, involved in the biosynthesis of isopentenyl diphosphate (IPP) and dimethylallyl diphosphate (DMAPP), two major building blocks of isoprenoid compounds. Catalyzes the conversion of 4-diphosphocytidyl-2-C-methyl-D-erythritol 2-phosphate (CDP-ME2P) to 2-C-methyl-D-erythritol 2,4-cyclodiphosphate (ME-CPP) with a corresponding release of cytidine 5-monophosphate (CMP). The sequence is that of 2-C-methyl-D-erythritol 2,4-cyclodiphosphate synthase from Thermotoga neapolitana (strain ATCC 49049 / DSM 4359 / NBRC 107923 / NS-E).